The following is a 253-amino-acid chain: uncharacterized protein (253 aa).

This sequence belongs to the methyltransferase superfamily.

This is an uncharacterized protein from Mycobacterium avium (strain 104).